Reading from the N-terminus, the 275-residue chain is tRNA (guanine-N(1)-)-methyltransferase (275 aa).

S-adenosyl-L-methionine contacts are provided by residues Gly124 and Ile149 to Leu154.

It belongs to the RNA methyltransferase TrmD family. As to quaternary structure, homodimer.

The protein localises to the cytoplasm. The catalysed reaction is guanosine(37) in tRNA + S-adenosyl-L-methionine = N(1)-methylguanosine(37) in tRNA + S-adenosyl-L-homocysteine + H(+). Its function is as follows. Specifically methylates guanosine-37 in various tRNAs. The polypeptide is tRNA (guanine-N(1)-)-methyltransferase (Bifidobacterium animalis subsp. lactis (strain AD011)).